A 151-amino-acid chain; its full sequence is uncharacterized protein (151 aa).

The next 3 helical transmembrane spans lie at 14–34 (GAAL…YWLI), 45–65 (ISLV…GYLI), and 91–111 (VIVA…ASLI).

Its subcellular location is the cell membrane. This is an uncharacterized protein from Bacillus subtilis (strain 168).